Reading from the N-terminus, the 297-residue chain is Lipoprotein NlpD/LppB homolog (297 aa).

The signal sequence occupies residues 1–22 (MDKGEGLRLAATLRQWTRLYGG). Residue Cys-23 is the site of N-palmitoyl cysteine attachment. Cys-23 carries the S-diacylglycerol cysteine lipid modification. The 45-residue stretch at 67–111 (GQYIVRRGDTLYSIAFRFGWDWKALAARNGIAPPYTIQVGQAIQF) folds into the LysM domain. Positions 134 to 168 (TKPTPVPPAVSTSVPAKPAPAPASTTTPPSSGATP) are disordered.

It belongs to the E.coli NlpD/Haemophilus LppB family.

The protein resides in the cell inner membrane. This is Lipoprotein NlpD/LppB homolog from Pseudomonas aeruginosa (strain ATCC 15692 / DSM 22644 / CIP 104116 / JCM 14847 / LMG 12228 / 1C / PRS 101 / PAO1).